The chain runs to 567 residues: NAC domain-containing protein 78 (567 aa).

The 151-residue stretch at 9–159 (LAPGFRFHPT…AYVLCRIFQK (151 aa)) folds into the NAC domain. The DNA-binding element occupies 108–165 (VGMKKTLVYHKGRAPRGERTNWVMHEYRLSDEDLKKAGVPQEAYVLCRIFQKSGTGPK). The segment at 393 to 436 (NQEALDQKPAPKELEKEVAGGKEAVEEKESGEGSSSKQDTDFKD) is disordered. The span at 397–423 (LDQKPAPKELEKEVAGGKEAVEEKESG) shows a compositional bias: basic and acidic residues. The helical transmembrane segment at 544–564 (LVFMCLWVLLLSVSFKIVTMV) threads the bilayer.

In terms of tissue distribution, expressed in root meristem. Expressed in roots, rosette leaves, cauline leaves, shoot apex, stems and flowers.

It localises to the membrane. Its subcellular location is the nucleus. Functionally, transcriptional activator activated by proteolytic cleavage through regulated intramembrane proteolysis (RIP). Transcripition activator associated with the induction of genes related to flavonoid biosynthesis and required for the accumulation of anthocyanins in response to high light stress. Plays a role in the regulation of 20S and 26S proteasomes in response to high light stress. The polypeptide is NAC domain-containing protein 78 (NAC078) (Arabidopsis thaliana (Mouse-ear cress)).